The chain runs to 311 residues: Methionyl-tRNA formyltransferase (311 aa).

109-112 (SLLP) contributes to the (6S)-5,6,7,8-tetrahydrofolate binding site.

Belongs to the Fmt family.

It carries out the reaction L-methionyl-tRNA(fMet) + (6R)-10-formyltetrahydrofolate = N-formyl-L-methionyl-tRNA(fMet) + (6S)-5,6,7,8-tetrahydrofolate + H(+). Attaches a formyl group to the free amino group of methionyl-tRNA(fMet). The formyl group appears to play a dual role in the initiator identity of N-formylmethionyl-tRNA by promoting its recognition by IF2 and preventing the misappropriation of this tRNA by the elongation apparatus. This Kosmotoga olearia (strain ATCC BAA-1733 / DSM 21960 / TBF 19.5.1) protein is Methionyl-tRNA formyltransferase.